The following is a 311-amino-acid chain: Lipoyl synthase (311 aa).

Residues cysteine 58, cysteine 63, cysteine 69, cysteine 84, cysteine 88, cysteine 91, and serine 298 each coordinate [4Fe-4S] cluster. Residues 70–287 (FGHGTATFMI…EQEALAMGFR (218 aa)) enclose the Radical SAM core domain.

This sequence belongs to the radical SAM superfamily. Lipoyl synthase family. The cofactor is [4Fe-4S] cluster.

The protein resides in the cytoplasm. It carries out the reaction [[Fe-S] cluster scaffold protein carrying a second [4Fe-4S](2+) cluster] + N(6)-octanoyl-L-lysyl-[protein] + 2 oxidized [2Fe-2S]-[ferredoxin] + 2 S-adenosyl-L-methionine + 4 H(+) = [[Fe-S] cluster scaffold protein] + N(6)-[(R)-dihydrolipoyl]-L-lysyl-[protein] + 4 Fe(3+) + 2 hydrogen sulfide + 2 5'-deoxyadenosine + 2 L-methionine + 2 reduced [2Fe-2S]-[ferredoxin]. It functions in the pathway protein modification; protein lipoylation via endogenous pathway; protein N(6)-(lipoyl)lysine from octanoyl-[acyl-carrier-protein]: step 2/2. Its function is as follows. Catalyzes the radical-mediated insertion of two sulfur atoms into the C-6 and C-8 positions of the octanoyl moiety bound to the lipoyl domains of lipoate-dependent enzymes, thereby converting the octanoylated domains into lipoylated derivatives. This chain is Lipoyl synthase, found in Thiobacillus denitrificans (strain ATCC 25259 / T1).